The sequence spans 256 residues: uncharacterized protein (256 aa).

The signal sequence occupies residues 1–24 (MIKRVNKLVLGISLLFLVISITAG). Residue Cys25 is the site of N-palmitoyl cysteine attachment. Cys25 is lipidated: S-diacylglycerol cysteine.

This sequence belongs to the staphylococcal tandem lipoprotein family.

The protein localises to the cell membrane. This is an uncharacterized protein from Staphylococcus aureus (strain NCTC 8325 / PS 47).